The chain runs to 1027 residues: INO80 complex subunit D (1027 aa).

Residue lysine 87 forms a Glycyl lysine isopeptide (Lys-Gly) (interchain with G-Cter in SUMO2) linkage. Serine 132 bears the Phosphoserine mark. Disordered stretches follow at residues 193-278, 519-574, 813-850, 914-969, and 982-1027; these read HFSP…VDPP, RGDN…LSMP, RQQYSSDHSHSSPHGSHYDSEHVPSPYSDHITSPHTTS, LSTS…TSPK, and QLSS…PSPN. The segment covering 201-216 has biased composition (low complexity); the sequence is SQQQPPQQHSHLSPLS. The segment covering 229–257 has biased composition (polar residues); it reads VCKSPQPQNTSLPMQGVAPTTHTIAQARQ. The span at 525–559 shows a compositional bias: basic residues; sequence KVQHQQQRKPRKKTKPPALTKKHKKKRRRGPRRPQ. A compositionally biased stretch (low complexity) spans 914–932; sequence LSTSLSTPPTTSNSETTQP. Polar residues predominate over residues 937-954; the sequence is VTPSSSSVLPGLPQTSFS. Positions 1001–1027 are enriched in low complexity; sequence APPTGFTVTGATATSTNNASSPFPSPN.

This sequence belongs to the INO80D family. In terms of assembly, component of the chromatin remodeling INO80 complex; specifically part of a complex module associated with the N-terminus of INO80.

It localises to the nucleus. In terms of biological role, putative regulatory component of the chromatin remodeling INO80 complex which is involved in transcriptional regulation, DNA replication and probably DNA repair. The protein is INO80 complex subunit D of Homo sapiens (Human).